The sequence spans 739 residues: Phosphoribosylformylglycinamidine synthase subunit PurL (739 aa).

H54 is a catalytic residue. ATP is bound by residues Y57 and K96. E98 contacts Mg(2+). Residues 99–102 (SHNH) and R121 each bind substrate. H100 serves as the catalytic Proton acceptor. D122 contacts Mg(2+). Residue Q245 coordinates substrate. D273 is a Mg(2+) binding site. Residue 317 to 319 (ESQ) participates in substrate binding. The ATP site is built by D500 and G537. Position 538 (N538) interacts with Mg(2+). S540 is a substrate binding site.

This sequence belongs to the FGAMS family. Monomer. Part of the FGAM synthase complex composed of 1 PurL, 1 PurQ and 2 PurS subunits.

The protein resides in the cytoplasm. It carries out the reaction N(2)-formyl-N(1)-(5-phospho-beta-D-ribosyl)glycinamide + L-glutamine + ATP + H2O = 2-formamido-N(1)-(5-O-phospho-beta-D-ribosyl)acetamidine + L-glutamate + ADP + phosphate + H(+). The protein operates within purine metabolism; IMP biosynthesis via de novo pathway; 5-amino-1-(5-phospho-D-ribosyl)imidazole from N(2)-formyl-N(1)-(5-phospho-D-ribosyl)glycinamide: step 1/2. Its function is as follows. Part of the phosphoribosylformylglycinamidine synthase complex involved in the purines biosynthetic pathway. Catalyzes the ATP-dependent conversion of formylglycinamide ribonucleotide (FGAR) and glutamine to yield formylglycinamidine ribonucleotide (FGAM) and glutamate. The FGAM synthase complex is composed of three subunits. PurQ produces an ammonia molecule by converting glutamine to glutamate. PurL transfers the ammonia molecule to FGAR to form FGAM in an ATP-dependent manner. PurS interacts with PurQ and PurL and is thought to assist in the transfer of the ammonia molecule from PurQ to PurL. This chain is Phosphoribosylformylglycinamidine synthase subunit PurL, found in Bacillus cereus (strain AH187).